The chain runs to 147 residues: Hemoglobin subunit beta-2 (147 aa).

One can recognise a Globin domain in the interval 3–147; the sequence is EWTDSERAII…VVSALGRQYH (145 aa). Residues histidine 64 and histidine 93 each contribute to the heme b site.

The protein belongs to the globin family. In terms of assembly, hb 3 is a heterotetramer of two alpha-2 and two beta-2 chains. In terms of tissue distribution, red blood cells.

Involved in oxygen transport from gills to the various peripheral tissues. The protein is Hemoglobin subunit beta-2 (hbb2) of Boreogadus saida (Polar cod).